Reading from the N-terminus, the 967-residue chain is Mediator of RNA polymerase II transcription subunit 14 (967 aa).

It belongs to the Mediator complex subunit 14 family. As to quaternary structure, component of the Mediator complex.

The protein localises to the nucleus. Functionally, component of the Mediator complex, a coactivator involved in the regulated transcription of nearly all RNA polymerase II-dependent genes. Mediator functions as a bridge to convey information from gene-specific regulatory proteins to the basal RNA polymerase II transcription machinery. Mediator is recruited to promoters by direct interactions with regulatory proteins and serves as a scaffold for the assembly of a functional preinitiation complex with RNA polymerase II and the general transcription factors. In Eremothecium gossypii (strain ATCC 10895 / CBS 109.51 / FGSC 9923 / NRRL Y-1056) (Yeast), this protein is Mediator of RNA polymerase II transcription subunit 14 (RGR1).